Here is a 633-residue protein sequence, read N- to C-terminus: Proline-rich receptor-like protein kinase PERK4 (633 aa).

The segment covering 1–29 (MASSPESAPPTNSTSSPSPPSNTNSTTSS) has biased composition (low complexity). A disordered region spans residues 1–145 (MASSPESAPP…GSSGGGGGGR (145 aa)). Residues 1–151 (MASSPESAPP…GGGRSNTNTA (151 aa)) are Extracellular-facing. Residues N12 and N24 are each glycosylated (N-linked (GlcNAc...) asparagine). Pro residues-rich tracts occupy residues 30 to 41 (PPAPSPPSPTPP) and 48 to 65 (SPPP…PNPP). N66 carries an N-linked (GlcNAc...) asparagine glycan. The span at 77 to 90 (QGGGGERGNGGNNG) shows a compositional bias: gly residues. Positions 106–135 (SRSNGDNGGSRSSPPGDTGGSRSDNPPSSG) are enriched in low complexity. Gly residues predominate over residues 136 to 145 (GSSGGGGGGR). The helical transmembrane segment at 152 to 172 (IIVGVLVGAGLLMIVLIIVCL) threads the bilayer. The Cytoplasmic portion of the chain corresponds to 173–633 (RRKKKRKDSF…MGTKSPTPPK (461 aa)). A compositionally biased stretch (low complexity) spans 193-222 (QYYGNNNNNNASQNYPNWHLNSQGQNQQST). The tract at residues 193–255 (QYYGNNNNNN…SMYSGPSRPV (63 aa)) is disordered. The residue at position 273 (T273) is a Phosphothreonine. One can recognise a Protein kinase domain in the interval 284–562 (FTDANLLGQG…VRALEGEVSL (279 aa)). ATP contacts are provided by residues 290-298 (LGQGGFGYV) and K312. The residue at position 357 (Y357) is a Phosphotyrosine. D408 serves as the catalytic Proton acceptor. S441 is modified (phosphoserine). A phosphothreonine mark is found at T442 and T447. The residue at position 455 (Y455) is a Phosphotyrosine. A compositionally biased stretch (polar residues) spans 608 to 619 (FPVSDCEGTSSN). Residues 608–633 (FPVSDCEGTSSNDSRDMGTKSPTPPK) form a disordered region.

It belongs to the protein kinase superfamily. Ser/Thr protein kinase family. In terms of tissue distribution, mostly expressed in inflorescence bolts. Also present in roots, stems, germinated seeds, cotyledons, pollen, stamen and stigma.

It is found in the cell membrane. It carries out the reaction L-seryl-[protein] + ATP = O-phospho-L-seryl-[protein] + ADP + H(+). It catalyses the reaction L-threonyl-[protein] + ATP = O-phospho-L-threonyl-[protein] + ADP + H(+). With respect to regulation, activated by ABA and Ca(2+). Functionally, required during abscisic acid (ABA)-mediated activation of Ca(2+) channels. Regulates ABA signaling pathways. Modulates the expression of genes related to cell elongation and ABA signaling during root growth. The protein is Proline-rich receptor-like protein kinase PERK4 (PERK4) of Arabidopsis thaliana (Mouse-ear cress).